A 166-amino-acid polypeptide reads, in one-letter code: MAATMFRATLRGWRTGVQRGCGLRLLSQTQGPPDYPRFVESVDEYQFVERLLPATRIPDPPKHEHYPTPSGWQPPRDPPPNLPYFVRRSRMHNIPVYKDITHGNRQMTVIRKVEGDIWALQKDVEDFLSPLLGKTPVTQVNEVTGTLRIKGYFDQELKAWLLEKGF.

Residues 56-78 form a disordered region; sequence RIPDPPKHEHYPTPSGWQPPRDP.

This sequence belongs to the mitochondrion-specific ribosomal protein mL49 family. In terms of assembly, component of the mitochondrial large ribosomal subunit (mt-LSU). Mature mammalian 55S mitochondrial ribosomes consist of a small (28S) and a large (39S) subunit. The 28S small subunit contains a 12S ribosomal RNA (12S mt-rRNA) and 30 different proteins. The 39S large subunit contains a 16S rRNA (16S mt-rRNA), a copy of mitochondrial valine transfer RNA (mt-tRNA(Val)), which plays an integral structural role, and 52 different proteins. Interacts with OXA1L. Ubiquitous.

The protein localises to the mitochondrion. The protein is Large ribosomal subunit protein mL49 (MRPL49) of Homo sapiens (Human).